Here is a 698-residue protein sequence, read N- to C-terminus: Macrophomene synthase (698 aa).

The interval 21–340 (MEYMYSVPLD…SCDRYSSYRR (320 aa)) is terpene cyclase. Mg(2+) is bound at residue Asp-113. The DDXXD 1 signature appears at 113–117 (DNIAE). Positions 242–250 (NDFFSFNYE) match the NSE/DTE motif. The prenyltransferase stretch occupies residues 341–696 (EKHQMELPIR…IQLALERLRI (356 aa)). Residues 368–387 (LPNGKQLDAPTESSGKDLSD) form a disordered region. Isopentenyl diphosphate contacts are provided by Lys-417, Arg-420, and His-449. Residues Asp-456 and Asp-460 each contribute to the Mg(2+) site. Positions 456–460 (DDIED) match the DDXXD 2 motif. Dimethylallyl diphosphate is bound at residue Arg-465. Position 466 (Arg-466) interacts with isopentenyl diphosphate. Dimethylallyl diphosphate contacts are provided by Lys-543, Thr-544, Gln-579, Asn-586, Lys-596, and Lys-606.

In the N-terminal section; belongs to the terpene synthase family. The protein in the C-terminal section; belongs to the FPP/GGPP synthase family. In terms of assembly, hexamer. The cofactor is Mg(2+).

It carries out the reaction 5 isopentenyl diphosphate + dimethylallyl diphosphate = all-trans-hexaprenyl diphosphate + 5 diphosphate. The enzyme catalyses all-trans-hexaprenyl diphosphate = macrophomene + diphosphate. Bifunctional terpene synthase that converts dimethylallyl diphosphate (DMAPP) and isopentenyl diphosphate (IPP) into macrophomene as a single product. The C-terminal prenyltransferase (PT) domain of MpMS catalyzes formation of hexaprenyl diphosphate (HexPP), whereas the N-terminal terpene cyclase (TC) domain catalyzes the cyclization of HexPP to macrophomene. This Macrophomina phaseolina (strain MS6) (Charcoal rot fungus) protein is Macrophomene synthase.